A 229-amino-acid polypeptide reads, in one-letter code: 1-Cys peroxiredoxin PER1 (229 aa).

A Thioredoxin domain is found at 4 to 173 (LTIGDTVPNL…VLRAVDSLLT (170 aa)). The active-site Cysteine sulfenic acid (-SOH) intermediate is C46. Residues 205-228 (RKMFPQGFETADLPSKKGYLRFTK) carry the Bipartite nuclear localization signal motif.

Belongs to the peroxiredoxin family. Prx6 subfamily.

It is found in the nucleus. The protein localises to the cytoplasm. It carries out the reaction a hydroperoxide + [thioredoxin]-dithiol = an alcohol + [thioredoxin]-disulfide + H2O. In terms of biological role, thiol-specific peroxidase that catalyzes the reduction of hydrogen peroxide and organic hydroperoxides to water and alcohols, respectively. Seems to contribute to the inhibition of germination during stress. The protein is 1-Cys peroxiredoxin PER1 (PER1) of Zea mays (Maize).